A 441-amino-acid chain; its full sequence is Glutamate--tRNA ligase 1 (441 aa).

The short motif at 8–18 (PSPTGHIHVGN) is the 'HIGH' region element. The 'KMSKS' region signature appears at 239–243 (ELSKR). Lys-242 lines the ATP pocket.

It belongs to the class-I aminoacyl-tRNA synthetase family. Glutamate--tRNA ligase type 1 subfamily. Monomer.

The protein resides in the cytoplasm. The enzyme catalyses tRNA(Glu) + L-glutamate + ATP = L-glutamyl-tRNA(Glu) + AMP + diphosphate. Catalyzes the attachment of glutamate to tRNA(Glu) in a two-step reaction: glutamate is first activated by ATP to form Glu-AMP and then transferred to the acceptor end of tRNA(Glu). This Paracoccus denitrificans (strain Pd 1222) protein is Glutamate--tRNA ligase 1.